A 460-amino-acid chain; its full sequence is Muscarinic acetylcholine receptor M1 (460 aa).

At 1–22 (MNTSVPPAVSPNITVLAPGKGP) the chain is on the extracellular side. 2 N-linked (GlcNAc...) asparagine glycosylation sites follow: N2 and N12. A helical membrane pass occupies residues 23 to 48 (WQVAFIGITTGLLSLATVTGNLLVLI). Topologically, residues 49 to 62 (SFKVNTELKTVNNY) are cytoplasmic. Residues 63–84 (FLLSLACADLIIGTFSMNLYTT) traverse the membrane as a helical segment. Over 85-95 (YLLMGHWALGT) the chain is Extracellular. Residues 96–121 (LACDLWLALDYVASNASVMNLLLISF) form a helical membrane-spanning segment. Cysteines 98 and 178 form a disulfide. Residues 122–142 (DRYFSVTRPLSYRAKRTPRRA) are Cytoplasmic-facing. The chain crosses the membrane as a helical span at residues 143-164 (ALMIGLAWLVSFVLWAPAILFW). Residues 165 to 185 (QYLVGERTVLAGQCYIQFLSQ) are Extracellular-facing. A helical membrane pass occupies residues 186-209 (PIITFGTAMAAFYLPVTVMCTLYW). Over 210 to 366 (RIYRETENRA…LVKEKKAART (157 aa)) the chain is Cytoplasmic. Disordered stretches follow at residues 225 to 257 (LQGS…SPPG), 274 to 297 (WKEE…EEPG), and 310 to 351 (EAQA…QLAK). T230 bears the Phosphothreonine mark. Residues 238 to 257 (SSSSERSQPGAEGSPESPPG) are compositionally biased toward low complexity. Residue S254 is modified to Phosphoserine. Over residues 328–343 (RPTKKGRDRGGKGQKP) the composition is skewed to basic residues. Residues 367–390 (LSAILLAFILTWTPYNIMVLVSTF) traverse the membrane as a helical segment. The Extracellular segment spans residues 391–397 (CKDCVPE). A helical membrane pass occupies residues 398 to 420 (TLWELGYWLCYVNSTVNPMCYAL). At 421–460 (CNKAFRDTFRLLLLCRWDKRRWRKIPKRPGSVHRTPSRQC) the chain is on the cytoplasmic side. At S451 the chain carries Phosphoserine. Position 455 is a phosphothreonine (T455). S457 carries the phosphoserine modification.

This sequence belongs to the G-protein coupled receptor 1 family. Muscarinic acetylcholine receptor subfamily. CHRM1 sub-subfamily. Interacts with GPRASP2. Interacts with TMEM147.

The protein localises to the cell membrane. Its subcellular location is the postsynaptic cell membrane. In terms of biological role, the muscarinic acetylcholine receptor mediates various cellular responses, including inhibition of adenylate cyclase, breakdown of phosphoinositides and modulation of potassium channels through the action of G proteins. Primary transducing effect is Pi turnover. This is Muscarinic acetylcholine receptor M1 (Chrm1) from Mus musculus (Mouse).